The primary structure comprises 292 residues: Xyloglucan endotransglucosylase/hydrolase protein A (292 aa).

Residues 1–20 form the signal peptide; it reads MGSSLWTCLILLSLASASFA. Residues 21–219 form the GH16 domain; the sequence is ANPRTPIDVP…WSKAPFIASY (199 aa). Glutamate 105 functions as the Nucleophile in the catalytic mechanism. Glutamate 109 serves as the catalytic Proton donor. Residue glutamate 109 participates in xyloglucan binding. An N-linked (GlcNAc...) asparagine glycan is attached at asparagine 113. Xyloglucan is bound by residues 122-124, 132-134, 198-199, and glycine 203; these read QTN, DRE, and DW. 2 disulfide bridges follow: cysteine 227-cysteine 236 and cysteine 273-cysteine 286. Arginine 278 lines the xyloglucan pocket.

Belongs to the glycosyl hydrolase 16 family. XTH group 1 subfamily. In terms of processing, contains at least one intrachain disulfide bond essential for its enzymatic activity. As to expression, predominantly expressed in the phloem fibers of growing internodes. Expressed in xylem cells in the basal part of the internode. In the internode, it is expressed closer to the top of the internode compared to XTHB.

Its subcellular location is the secreted. It is found in the cell wall. The protein localises to the extracellular space. The protein resides in the apoplast. The catalysed reaction is breaks a beta-(1-&gt;4) bond in the backbone of a xyloglucan and transfers the xyloglucanyl segment on to O-4 of the non-reducing terminal glucose residue of an acceptor, which can be a xyloglucan or an oligosaccharide of xyloglucan.. In terms of biological role, catalyzes xyloglucan endohydrolysis (XEH) and/or endotransglycosylation (XET). Cleaves and religates xyloglucan polymers, an essential constituent of the primary cell wall, and thereby participates in cell wall construction of growing tissues. The chain is Xyloglucan endotransglucosylase/hydrolase protein A (XTHA) from Phaseolus angularis (Azuki bean).